A 467-amino-acid polypeptide reads, in one-letter code: Probable serine hydroxymethyltransferase, cytosolic (467 aa).

K243 is modified (N6-(pyridoxal phosphate)lysine).

The protein belongs to the SHMT family. In terms of assembly, homotetramer. The cofactor is pyridoxal 5'-phosphate.

The protein localises to the cytoplasm. The catalysed reaction is (6R)-5,10-methylene-5,6,7,8-tetrahydrofolate + glycine + H2O = (6S)-5,6,7,8-tetrahydrofolate + L-serine. The protein operates within one-carbon metabolism; tetrahydrofolate interconversion. Functionally, interconversion of serine and glycine. The polypeptide is Probable serine hydroxymethyltransferase, cytosolic (Schizosaccharomyces pombe (strain 972 / ATCC 24843) (Fission yeast)).